A 69-amino-acid chain; its full sequence is Large ribosomal subunit protein uL29 (69 aa).

The protein belongs to the universal ribosomal protein uL29 family.

The chain is Large ribosomal subunit protein uL29 from Rhodopseudomonas palustris (strain BisB5).